We begin with the raw amino-acid sequence, 588 residues long: L-fucose isomerase (588 aa).

Catalysis depends on proton acceptor residues glutamate 335 and aspartate 359. 3 residues coordinate Mn(2+): glutamate 335, aspartate 359, and histidine 525.

It belongs to the L-fucose isomerase family. Mn(2+) serves as cofactor.

The protein localises to the cytoplasm. The enzyme catalyses L-fucose = L-fuculose. It functions in the pathway carbohydrate degradation; L-fucose degradation; L-lactaldehyde and glycerone phosphate from L-fucose: step 1/3. In terms of biological role, converts the aldose L-fucose into the corresponding ketose L-fuculose. This is L-fucose isomerase from Streptococcus pneumoniae (strain P1031).